The sequence spans 200 residues: Mediator of RNA polymerase II transcription subunit 29 (200 aa).

Composition is skewed to low complexity over residues 1–21 (MAASQQQASAASSAAGVSGPS) and 36–48 (AQLVGPAQSGLLQ). The segment at 1–48 (MAASQQQASAASSAAGVSGPSSAGGPGPQQQPQPPAQLVGPAQSGLLQ) is disordered. A2 carries the N-acetylalanine modification.

The protein belongs to the Mediator complex subunit 29 family. Component of the Mediator complex, which is composed of MED1, MED4, MED6, MED7, MED8, MED9, MED10, MED11, MED12, MED13, MED13L, MED14, MED15, MED16, MED17, MED18, MED19, MED20, MED21, MED22, MED23, MED24, MED25, MED26, MED27, MED29, MED30, MED31, CCNC, CDK8 and CDC2L6/CDK11. The MED12, MED13, CCNC and CDK8 subunits form a distinct module termed the CDK8 module. Mediator containing the CDK8 module is less active than Mediator lacking this module in supporting transcriptional activation. Individual preparations of the Mediator complex lacking one or more distinct subunits have been variously termed ARC, CRSP, DRIP, PC2, SMCC and TRAP. Associates with the MED18/MED20 heteromer.

It is found in the nucleus. Functionally, component of the Mediator complex, a coactivator involved in the regulated transcription of nearly all RNA polymerase II-dependent genes. Mediator functions as a bridge to convey information from gene-specific regulatory proteins to the basal RNA polymerase II transcription machinery. Mediator is recruited to promoters by direct interactions with regulatory proteins and serves as a scaffold for the assembly of a functional preinitiation complex with RNA polymerase II and the general transcription factors. This chain is Mediator of RNA polymerase II transcription subunit 29 (MED29), found in Pongo abelii (Sumatran orangutan).